The sequence spans 150 residues: FAD synthase (150 aa).

Residues 11-12 (TF), 16-19 (HPGH), Asp96, and Tyr124 contribute to the ATP site.

This sequence belongs to the archaeal FAD synthase family. In terms of assembly, homodimer. A divalent metal cation serves as cofactor.

It carries out the reaction FMN + ATP + H(+) = FAD + diphosphate. The protein operates within cofactor biosynthesis; FAD biosynthesis; FAD from FMN: step 1/1. Functionally, catalyzes the transfer of the AMP portion of ATP to flavin mononucleotide (FMN) to produce flavin adenine dinucleotide (FAD) coenzyme. The protein is FAD synthase of Methanocaldococcus fervens (strain DSM 4213 / JCM 15782 / AG86) (Methanococcus fervens).